Reading from the N-terminus, the 388-residue chain is Processive diacylglycerol beta-glucosyltransferase (388 aa).

The protein belongs to the glycosyltransferase 28 family. UgtP subfamily.

It is found in the cell membrane. The enzyme catalyses a 1,2-diacyl-3-O-(beta-D-glucopyranosyl)-sn-glycerol + UDP-alpha-D-glucose = a 1,2-diacyl-3-O-(beta-D-Glc-(1-&gt;6)-beta-D-Glc)-sn-glycerol + UDP + H(+). It catalyses the reaction a 1,2-diacyl-3-O-(beta-D-Glc-(1-&gt;6)-beta-D-Glc)-sn-glycerol + UDP-alpha-D-glucose = a 1,2-diacyl-3-O-(beta-D-Glc-(1-&gt;6)-beta-D-Glc-(1-&gt;6)-beta-D-Glc)-sn-glycerol + UDP + H(+). It carries out the reaction a 1,2-diacyl-sn-glycerol + UDP-alpha-D-glucose = a 1,2-diacyl-3-O-(beta-D-glucopyranosyl)-sn-glycerol + UDP + H(+). It functions in the pathway glycolipid metabolism; diglucosyl-diacylglycerol biosynthesis. In terms of biological role, processive glucosyltransferase involved in the biosynthesis of both the bilayer- and non-bilayer-forming membrane glucolipids. Is able to successively transfer up to three glucosyl residues to diacylglycerol (DAG), thereby catalyzing the formation of beta-monoglucosyl-DAG (3-O-(beta-D-glucopyranosyl)-1,2-diacyl-sn-glycerol), beta-diglucosyl-DAG (3-O-(beta-D-glucopyranosyl-beta-(1-&gt;6)-D-glucopyranosyl)-1,2-diacyl-sn-glycerol) and beta-triglucosyl-DAG (3-O-(beta-D-glucopyranosyl-beta-(1-&gt;6)-D-glucopyranosyl-beta-(1-&gt;6)-D-glucopyranosyl)-1,2-diacyl-sn-glycerol). Beta-diglucosyl-DAG is the predominant glycolipid found in Bacillales and is also used as a membrane anchor for lipoteichoic acid (LTA). The chain is Processive diacylglycerol beta-glucosyltransferase from Bacillus cereus (strain B4264).